A 609-amino-acid polypeptide reads, in one-letter code: Invertase (609 aa).

The first 14 residues, 1–14 (MLKLLSLMVPLASA), serve as a signal peptide directing secretion. N23, N32, and N36 each carry an N-linked (GlcNAc...) asparagine glycan. Substrate is bound by residues 56 to 59 (WMND), Q77, and 119 to 120 (FS). The active site involves D59. 3 N-linked (GlcNAc...) asparagine glycosylation sites follow: N128, N129, and N135. Substrate is bound at residue 187–188 (RD). N227 and N233 each carry an N-linked (GlcNAc...) asparagine glycan. E245 provides a ligand contact to substrate. N-linked (GlcNAc...) asparagine glycans are attached at residues N257, N267, N277, N284, N291, N298, N303, and N345. W389 serves as a coordination point for substrate. 8 N-linked (GlcNAc...) asparagine glycosylation sites follow: N409, N420, N440, N448, N452, N477, N545, and N566.

The protein belongs to the glycosyl hydrolase 32 family.

The catalysed reaction is Hydrolysis of terminal non-reducing beta-D-fructofuranoside residues in beta-D-fructofuranosides.. This is Invertase (INV1) from Kluyveromyces lactis (strain ATCC 8585 / CBS 2359 / DSM 70799 / NBRC 1267 / NRRL Y-1140 / WM37) (Yeast).